The primary structure comprises 224 residues: UPF0758 protein lwe1562 (224 aa).

Positions 102–224 constitute an MPN domain; that stretch reads VIRCPDDAVK…YISLKEKGYF (123 aa). 3 residues coordinate Zn(2+): His173, His175, and Asp186. The JAMM motif motif lies at 173 to 186; the sequence is HNHPSGDPTPSSED.

The protein belongs to the UPF0758 family.

The chain is UPF0758 protein lwe1562 from Listeria welshimeri serovar 6b (strain ATCC 35897 / DSM 20650 / CCUG 15529 / CIP 8149 / NCTC 11857 / SLCC 5334 / V8).